Reading from the N-terminus, the 537-residue chain is Chaperonin GroEL 2 (537 aa).

Residues 29-32 (TLGP), 86-90 (DGTTT), G413, 477-479 (NAA), and D493 each bind ATP.

It belongs to the chaperonin (HSP60) family. As to quaternary structure, forms a cylinder of 14 subunits composed of two heptameric rings stacked back-to-back. Interacts with the co-chaperonin GroES.

It localises to the cytoplasm. It carries out the reaction ATP + H2O + a folded polypeptide = ADP + phosphate + an unfolded polypeptide.. Functionally, together with its co-chaperonin GroES, plays an essential role in assisting protein folding. The GroEL-GroES system forms a nano-cage that allows encapsulation of the non-native substrate proteins and provides a physical environment optimized to promote and accelerate protein folding. This chain is Chaperonin GroEL 2, found in Thermobifida fusca (strain YX).